A 209-amino-acid chain; its full sequence is MNKTNQLINICILVTLFLIGSSSALTLQVEPKSQECFYNFIESGKTSLLLYQVIRGGLLDINVKLTDPKGNTIFERLHFDTQMKGKQSFTAGESGAYKVCFNNEMSRFTAKVVTFTWASEEEGVKEVAKGDSITPMDQSVQKIERVLQSVIHEQKKLRYREQANRDTSESTNARVVWWTIAEVIVLVVMGVGQIWYLRKWFDNKSTGRV.

The first 24 residues, 1–24 (MNKTNQLINICILVTLFLIGSSSA), serve as a signal peptide directing secretion. Over 25–174 (LTLQVEPKSQ…RDTSESTNAR (150 aa)) the chain is Lumenal. Residues 34-119 (QECFYNFIES…AKVVTFTWAS (86 aa)) form the GOLD domain. A helical membrane pass occupies residues 175 to 195 (VVWWTIAEVIVLVVMGVGQIW). Topologically, residues 196 to 209 (YLRKWFDNKSTGRV) are cytoplasmic.

This sequence belongs to the EMP24/GP25L family.

The protein resides in the cytoplasmic vesicle membrane. In terms of biological role, could have a role in the budding of coatomer-coated and other species of coated vesicles. The chain is Transmembrane emp24 domain-containing protein B (empB) from Dictyostelium discoideum (Social amoeba).